Here is a 124-residue protein sequence, read N- to C-terminus: UPF0231 protein Sbal223_3655 (124 aa).

It belongs to the UPF0231 family.

This is UPF0231 protein Sbal223_3655 from Shewanella baltica (strain OS223).